The chain runs to 887 residues: Fibroblast growth factor receptor 2 (887 aa).

The first 18 residues, 1 to 18 (MLNKFIVIVTMLAMWNYA), serve as a signal peptide directing secretion. At 19 to 416 (QDCNFELSKN…KDCVGNSYFT (398 aa)) the chain is on the extracellular side. Ig-like C2-type domains are found at residues 22–115 (NFEL…EFIS) and 180–260 (VSGS…LRMK). Residues asparagine 28, asparagine 74, asparagine 93, asparagine 230, asparagine 261, asparagine 268, asparagine 328, asparagine 334, and asparagine 364 are each glycosylated (N-linked (GlcNAc...) asparagine). A disulfide bond links cysteine 43 and cysteine 104. Positions 297-387 (FNLNSRVCIN…YACRIINFKD (91 aa)) constitute an Ig-like C2-type 3 domain. Cysteine 313 and cysteine 380 are oxidised to a cystine. The chain crosses the membrane as a helical span at residues 417–437 (IIWYSISVGIIILVVISFLII). The Cytoplasmic portion of the chain corresponds to 438–887 (RLYNKYSNGY…SNQCYSTTIV (450 aa)). In terms of domain architecture, Protein kinase spans 585–862 (LIIGSKIGEG…IIDKLTHIQL (278 aa)). Residues 591-599 (IGEGAFGIV) and lysine 619 contribute to the ATP site. Aspartate 728 acts as the Proton acceptor in catalysis. Tyrosine 757 carries the post-translational modification Phosphotyrosine; by autocatalysis.

Belongs to the protein kinase superfamily. Tyr protein kinase family. Fibroblast growth factor receptor subfamily. In terms of tissue distribution, expressed in brain, stem cells and the mesenchymal cells.

The protein localises to the membrane. The enzyme catalyses L-tyrosyl-[protein] + ATP = O-phospho-L-tyrosyl-[protein] + ADP + H(+). Functionally, receptor for basic fibroblast growth factor. In Dugesia japonica (Planarian), this protein is Fibroblast growth factor receptor 2 (FGFR2).